Reading from the N-terminus, the 287-residue chain is ATP synthase gamma chain (287 aa).

This sequence belongs to the ATPase gamma chain family. In terms of assembly, F-type ATPases have 2 components, CF(1) - the catalytic core - and CF(0) - the membrane proton channel. CF(1) has five subunits: alpha(3), beta(3), gamma(1), delta(1), epsilon(1). CF(0) has three main subunits: a, b and c.

The protein localises to the cell inner membrane. Functionally, produces ATP from ADP in the presence of a proton gradient across the membrane. The gamma chain is believed to be important in regulating ATPase activity and the flow of protons through the CF(0) complex. The protein is ATP synthase gamma chain of Klebsiella pneumoniae (strain 342).